We begin with the raw amino-acid sequence, 64 residues long: Large ribosomal subunit protein uL29 (64 aa).

The protein belongs to the universal ribosomal protein uL29 family.

This chain is Large ribosomal subunit protein uL29, found in Cupriavidus necator (strain ATCC 17699 / DSM 428 / KCTC 22496 / NCIMB 10442 / H16 / Stanier 337) (Ralstonia eutropha).